The primary structure comprises 94 residues: Non-specific lipid-transfer protein 1 (94 aa).

Intrachain disulfides connect C4/C53, C14/C30, C31/C76, and C51/C90.

Functionally, plant non-specific lipid-transfer proteins transfer phospholipids as well as galactolipids across membranes. May play a role in wax or cutin deposition in the cell walls of expanding epidermal cells and certain secretory tissues. This Amaranthus hypochondriacus (Prince-of-Wales feather) protein is Non-specific lipid-transfer protein 1.